The sequence spans 573 residues: Squalene monooxygenase (573 aa).

The Cytoplasmic portion of the chain corresponds to 1–19 (MWTFLGIATFTYFYKKCGD). The interval 1-99 (MWTFLGIATF…EQLESKRRRK (99 aa)) is interaction with MARCHF6. The stretch at 20-40 (VTLANKELLLCVLVFLSLGLV) is an intramembrane region. Topologically, residues 41–573 (LSYRCRHRNG…IYSEMKYLVH (533 aa)) are cytoplasmic. Positions 61 to 72 (QFAAFSDILSAL) are required for degradation in response to high membrane cholesterol levels. Residues 100–573 (EVNLSETTLT…IYSEMKYLVH (474 aa)) form a sufficient for catalytic activity region. FAD contacts are provided by residues 132-133 (VL), 152-153 (ER), R160, R233, V249, D407, and M420. The interval 515–573 (PLLLIRHFFSVAVYATYFCFKSEPWATKPRALFSSGAILYKACSIIFPLIYSEMKYLVH) is hydrophobic; mediates interaction with membranes.

This sequence belongs to the squalene monooxygenase family. As to quaternary structure, interacts (via N-terminal domain) with MARCHF6. Interacts with SMIM22; this interaction modulates lipid droplet formation. Requires FAD as cofactor. Post-translationally, ubiquitinated by MARCHF6 in response to high cholesterol levels in intracellular membranes, leading to proteasomal degradation. As to expression, detected in lever (at protein level).

It is found in the microsome membrane. The protein localises to the endoplasmic reticulum membrane. The enzyme catalyses squalene + reduced [NADPH--hemoprotein reductase] + O2 = (S)-2,3-epoxysqualene + oxidized [NADPH--hemoprotein reductase] + H2O + H(+). Its pathway is terpene metabolism; lanosterol biosynthesis; lanosterol from farnesyl diphosphate: step 2/3. Inhibited by NB-598 ((E)N-ethyl-N-(6,6-dimethyl-2-hepten-4-ynyl)-3-[(3,3'-bi-thiophen-5-yl)methoxy]benzene-methanamine). Contrary to fungal enzymes, the mammalian enzyme is only slightly inhibited by terbinafine. Catalyzes the stereospecific oxidation of squalene to (S)-2,3-epoxysqualene, and is considered to be a rate-limiting enzyme in steroid biosynthesis. The polypeptide is Squalene monooxygenase (Sqle) (Rattus norvegicus (Rat)).